The following is a 187-amino-acid chain: HTH-type transcriptional repressor Rv1474c (187 aa).

One can recognise an HTH tetR-type domain in the interval 10-70; it reads AARRRQILDG…ALAREDTERM (61 aa). The segment at residues 33 to 52 is a DNA-binding region (H-T-H motif); sequence TVRRLEQAIGMSRGAIFHHF.

Homodimer.

Binding to DNA is abolished in the presence of high concentration of iron. Specifically binds to tetracycline, which leads to a conformational change in the structure of the protein and inhibits the DNA binding activity. In terms of biological role, represses the expression of the aconitase gene acn and its own expression, in an iron-responsive manner. Binds to the inverted repeat element present in the upstream region of acn (Rv1475c)-Rv1474c operon. Preferentially binds to major groove of the DNA. The polypeptide is HTH-type transcriptional repressor Rv1474c (Mycobacterium tuberculosis (strain ATCC 25618 / H37Rv)).